A 54-amino-acid chain; its full sequence is Large ribosomal subunit protein bL33 (54 aa).

Belongs to the bacterial ribosomal protein bL33 family.

This chain is Large ribosomal subunit protein bL33, found in Chloroflexus aurantiacus (strain ATCC 29366 / DSM 635 / J-10-fl).